Consider the following 285-residue polypeptide: Pantothenate synthetase (285 aa).

An ATP-binding site is contributed by 30–37 (MGYLHEGH). The Proton donor role is filled by histidine 37. Residue glutamine 61 participates in (R)-pantoate binding. Beta-alanine is bound at residue glutamine 61. An ATP-binding site is contributed by 148–151 (GKKD). (R)-pantoate is bound at residue glutamine 154. Residues isoleucine 177 and 185 to 188 (LSSR) contribute to the ATP site.

This sequence belongs to the pantothenate synthetase family. Homodimer.

It localises to the cytoplasm. The catalysed reaction is (R)-pantoate + beta-alanine + ATP = (R)-pantothenate + AMP + diphosphate + H(+). Its pathway is cofactor biosynthesis; (R)-pantothenate biosynthesis; (R)-pantothenate from (R)-pantoate and beta-alanine: step 1/1. Functionally, catalyzes the condensation of pantoate with beta-alanine in an ATP-dependent reaction via a pantoyl-adenylate intermediate. This is Pantothenate synthetase from Leptospira borgpetersenii serovar Hardjo-bovis (strain JB197).